We begin with the raw amino-acid sequence, 420 residues long: Tyrosine--tRNA ligase (420 aa).

Residue Y33 coordinates L-tyrosine. The short motif at 38 to 47 (PTADSLHVGH) is the 'HIGH' region element. 2 residues coordinate L-tyrosine: Y167 and Q171. Positions 227 to 231 (KFGKT) match the 'KMSKS' region motif. K230 contributes to the ATP binding site. Residues 353 to 419 (LTVADLLVKV…GKRNYALVKV (67 aa)) form the S4 RNA-binding domain.

It belongs to the class-I aminoacyl-tRNA synthetase family. TyrS type 1 subfamily. In terms of assembly, homodimer.

It is found in the cytoplasm. It catalyses the reaction tRNA(Tyr) + L-tyrosine + ATP = L-tyrosyl-tRNA(Tyr) + AMP + diphosphate + H(+). Catalyzes the attachment of tyrosine to tRNA(Tyr) in a two-step reaction: tyrosine is first activated by ATP to form Tyr-AMP and then transferred to the acceptor end of tRNA(Tyr). The sequence is that of Tyrosine--tRNA ligase from Anaeromyxobacter dehalogenans (strain 2CP-1 / ATCC BAA-258).